We begin with the raw amino-acid sequence, 144 residues long: Large ribosomal subunit protein uL16 (144 aa).

Belongs to the universal ribosomal protein uL16 family. In terms of assembly, part of the 50S ribosomal subunit.

Its function is as follows. Binds 23S rRNA and is also seen to make contacts with the A and possibly P site tRNAs. The protein is Large ribosomal subunit protein uL16 of Ligilactobacillus salivarius (strain UCC118) (Lactobacillus salivarius).